The following is a 291-amino-acid chain: Beta-lactamase OXY-1 (291 aa).

An N-terminal signal peptide occupies residues Met-1–Gly-24. Residue Ser-73 is the Acyl-ester intermediate of the active site. Lys-237 to Gly-239 serves as a coordination point for substrate.

The protein belongs to the class-A beta-lactamase family.

It carries out the reaction a beta-lactam + H2O = a substituted beta-amino acid. In terms of biological role, hydrolyzes broad-spectrum beta-lactam antibiotics. Active against cephalosporins. This Klebsiella oxytoca protein is Beta-lactamase OXY-1 (bla).